A 151-amino-acid polypeptide reads, in one-letter code: 3-hydroxyacyl-[acyl-carrier-protein] dehydratase FabZ (151 aa).

The active site involves histidine 54.

The protein belongs to the thioester dehydratase family. FabZ subfamily.

Its subcellular location is the cytoplasm. It carries out the reaction a (3R)-hydroxyacyl-[ACP] = a (2E)-enoyl-[ACP] + H2O. Its function is as follows. Involved in unsaturated fatty acids biosynthesis. Catalyzes the dehydration of short chain beta-hydroxyacyl-ACPs and long chain saturated and unsaturated beta-hydroxyacyl-ACPs. The polypeptide is 3-hydroxyacyl-[acyl-carrier-protein] dehydratase FabZ (Buchnera aphidicola subsp. Acyrthosiphon pisum (strain 5A)).